Reading from the N-terminus, the 251-residue chain is Small ribosomal subunit protein uS2 (251 aa).

It belongs to the universal ribosomal protein uS2 family.

This is Small ribosomal subunit protein uS2 from Nitrosomonas europaea (strain ATCC 19718 / CIP 103999 / KCTC 2705 / NBRC 14298).